The sequence spans 433 residues: ATP-sensitive inward rectifier potassium channel 12 (433 aa).

The Cytoplasmic segment spans residues M1–D77. C75 bears the S-nitrosocysteine mark. A helical membrane pass occupies residues I78–V104. R79 and R81 together coordinate a 1,2-diacyl-sn-glycero-3-phospho-(1D-myo-inositol-4,5-bisphosphate). Residues I105–G129 are Extracellular-facing. Cysteines 123 and 155 form a disulfide. Positions F130–Y146 form an intramembrane region, helical; Pore-forming. Positions 143, 144, 145, and 146 each coordinate K(+). A Selectivity filter motif is present at residues T143 to L148. Over G147 to C155 the chain is Extracellular. The helical transmembrane segment at P156–K183 threads the bilayer. Positions 183 and 188 each coordinate a 1,2-diacyl-sn-glycero-3-phospho-(1D-myo-inositol-4,5-bisphosphate). The Cytoplasmic portion of the chain corresponds to M184–I433. The interval D387 to I433 is disordered. A compositionally biased stretch (basic and acidic residues) spans Q396–R414. The short motif at S431–I433 is the PDZ-binding element.

Belongs to the inward rectifier-type potassium channel (TC 1.A.2.1) family. KCNJ12 subfamily. Homotetramer. Forms heteromer with KCNJ4. Can form heteromeric channels with Kir2.6/KCNJ18. Association, via its PDZ-recognition domain, with LIN7A, LIN7B, LIN7C, DLG1, CASK and APBA1 plays a key role in its localization and trafficking.

It localises to the membrane. The protein localises to the cell membrane. Its subcellular location is the sarcolemma. It is found in the T-tubule. The catalysed reaction is K(+)(in) = K(+)(out). Its activity is regulated as follows. Activated by phosphatidylinositol 4,5-biphosphate (PtdIns(4,5)P2). PtdIns(4,5)P2 binding to the cytoplasmic side of the channel triggers a conformation change leading to channel opening. Inhibited by Ba(2+). Its function is as follows. Inward rectifying potassium channel that probably participates in controlling the resting membrane potential in electrically excitable cells. Probably participates in establishing action potential waveform and excitability of neuronal and muscle tissues. Inward rectifier potassium channels are characterized by a greater tendency to allow potassium to flow into the cell rather than out of it. Their voltage dependence is regulated by the concentration of extracellular potassium; as external potassium is raised, the voltage range of the channel opening shifts to more positive voltages. The inward rectification is mainly due to the blockage of outward current by internal magnesium. This is ATP-sensitive inward rectifier potassium channel 12 (KCNJ12) from Homo sapiens (Human).